Here is a 231-residue protein sequence, read N- to C-terminus: MKFGVLIFPGSNCDHDAHWVLGQVAKQPVTFLWHESHDLENCDAIVVPGGFAYGDYLRTGAIAKFSPVMEAVRKFADKGGLVIGICNGFQILTESGLLPGALLRNEGLKYICKPVNIRVETTDAPFTQGLKKGEVLQVPIGHMEGNYVCDDATLAELKKQDRIVFRYATPDGQITREANPNGSIENIAGICNEGRNVLGMMPHPERASENELGMTDGFRIFESMVGAMAKR.

One can recognise a Glutamine amidotransferase type-1 domain in the interval 3–231 (FGVLIFPGSN…ESMVGAMAKR (229 aa)). The Nucleophile role is filled by cysteine 86. Active-site residues include histidine 203 and glutamate 205.

In terms of assembly, part of the FGAM synthase complex composed of 1 PurL, 1 PurQ and 2 PurS subunits.

It is found in the cytoplasm. It carries out the reaction N(2)-formyl-N(1)-(5-phospho-beta-D-ribosyl)glycinamide + L-glutamine + ATP + H2O = 2-formamido-N(1)-(5-O-phospho-beta-D-ribosyl)acetamidine + L-glutamate + ADP + phosphate + H(+). The enzyme catalyses L-glutamine + H2O = L-glutamate + NH4(+). The protein operates within purine metabolism; IMP biosynthesis via de novo pathway; 5-amino-1-(5-phospho-D-ribosyl)imidazole from N(2)-formyl-N(1)-(5-phospho-D-ribosyl)glycinamide: step 1/2. In terms of biological role, part of the phosphoribosylformylglycinamidine synthase complex involved in the purines biosynthetic pathway. Catalyzes the ATP-dependent conversion of formylglycinamide ribonucleotide (FGAR) and glutamine to yield formylglycinamidine ribonucleotide (FGAM) and glutamate. The FGAM synthase complex is composed of three subunits. PurQ produces an ammonia molecule by converting glutamine to glutamate. PurL transfers the ammonia molecule to FGAR to form FGAM in an ATP-dependent manner. PurS interacts with PurQ and PurL and is thought to assist in the transfer of the ammonia molecule from PurQ to PurL. In Koribacter versatilis (strain Ellin345), this protein is Phosphoribosylformylglycinamidine synthase subunit PurQ.